A 219-amino-acid polypeptide reads, in one-letter code: Ribosomal RNA small subunit methyltransferase G (219 aa).

S-adenosyl-L-methionine contacts are provided by residues glycine 78, phenylalanine 83, 129-130, and arginine 146; that span reads GE.

It belongs to the methyltransferase superfamily. RNA methyltransferase RsmG family.

The protein localises to the cytoplasm. It carries out the reaction guanosine(527) in 16S rRNA + S-adenosyl-L-methionine = N(7)-methylguanosine(527) in 16S rRNA + S-adenosyl-L-homocysteine. Functionally, specifically methylates the N7 position of guanine in position 527 of 16S rRNA. This is Ribosomal RNA small subunit methyltransferase G from Geotalea uraniireducens (strain Rf4) (Geobacter uraniireducens).